Here is a 429-residue protein sequence, read N- to C-terminus: D-amino acid dehydrogenase 1 (429 aa).

V3 to Y17 contacts FAD.

The protein belongs to the DadA oxidoreductase family. FAD is required as a cofactor.

The enzyme catalyses a D-alpha-amino acid + A + H2O = a 2-oxocarboxylate + AH2 + NH4(+). In terms of biological role, oxidative deamination of D-amino acids. The chain is D-amino acid dehydrogenase 1 (dadA1) from Ralstonia nicotianae (strain ATCC BAA-1114 / GMI1000) (Ralstonia solanacearum).